The sequence spans 35 residues: Conotoxin Cal6.1c (35 aa).

Positions 1–35 (GLNRPSKRCLAGSAPCEFHKRSTCCSGHCIIWWCA) are excised as a propeptide. Cystine bridges form between Cys-9-Cys-25, Cys-16-Cys-29, and Cys-24-Cys-34.

This sequence belongs to the conotoxin O1 superfamily. In terms of tissue distribution, expressed by the venom duct.

The protein localises to the secreted. In terms of biological role, probable neurotoxin with unknown target. Possibly targets ion channels. The chain is Conotoxin Cal6.1c from Californiconus californicus (California cone).